We begin with the raw amino-acid sequence, 446 residues long: FAD-dependent monooxygenase eupB (446 aa).

The chain crosses the membrane as a helical span at residues 10 to 30 (EPHIAIVGGGIVGVILTLGLL). N-linked (GlcNAc...) asparagine glycosylation is present at Asn-33. The FAD site is built by Glu-40, Ala-53, and Arg-125. Catalysis depends on residues Arg-206 and Tyr-239. The N-linked (GlcNAc...) asparagine glycan is linked to Asn-243. Positions 322 and 335 each coordinate FAD. A glycan (N-linked (GlcNAc...) asparagine) is linked at Asn-395.

This sequence belongs to the paxM FAD-dependent monooxygenase family. It depends on FAD as a cofactor.

The protein localises to the membrane. The protein operates within secondary metabolite biosynthesis; terpenoid biosynthesis. In terms of biological role, FAD-dependent monooxygenase; part of the gene cluster that mediates the biosynthesis of eupenifeldin, a bistropolone meroterpenoid that acts as an antitumor agent. The first step of eupenifeldin biosynthesis is the biosynthesis of 3-methylorcinaldehyde performed by the non-reducing polyketide synthase eupA. Oxidative dearomatization of 3-methylorcinaldehyde likely catalyzed by the FAD-dependent monooxygenase eupB is followed by oxidative ring expansion by the 2-oxoglutarate-dependent dioxygenase eupC to provide the first tropolone metabolite, tropolone stipitaldehyde. In parallel, generation of sesquiterpene alpha-humulene from farnesylpyrophosphate (FPP) is catalyzed by the terpene cyclase eupE. The cytochrome P450 monooxygenase eupD then hydroxylates humulene to humulenol. The putative Diels-Alderase eupF probably catalyzes the formation of the tropolone-humulene skeleton by linking humulenol and the polyketide moiety. The short-chain dehydrogenase/reductase eupG and the flavin-dependent monooxygenase eupH are also essential for eupenifeldin biosynthesis and are likely the additional decorating enzymes of the tropolone-humulene skeleton to produce final eupenifeldin or derivatives. The sequence is that of FAD-dependent monooxygenase eupB from Phoma sp.